Reading from the N-terminus, the 295-residue chain is Phosphoribosylaminoimidazole-succinocarboxamide synthase (295 aa).

It belongs to the SAICAR synthetase family.

It catalyses the reaction 5-amino-1-(5-phospho-D-ribosyl)imidazole-4-carboxylate + L-aspartate + ATP = (2S)-2-[5-amino-1-(5-phospho-beta-D-ribosyl)imidazole-4-carboxamido]succinate + ADP + phosphate + 2 H(+). It participates in purine metabolism; IMP biosynthesis via de novo pathway; 5-amino-1-(5-phospho-D-ribosyl)imidazole-4-carboxamide from 5-amino-1-(5-phospho-D-ribosyl)imidazole-4-carboxylate: step 1/2. The chain is Phosphoribosylaminoimidazole-succinocarboxamide synthase from Desulforapulum autotrophicum (strain ATCC 43914 / DSM 3382 / VKM B-1955 / HRM2) (Desulfobacterium autotrophicum).